Consider the following 134-residue polypeptide: Global transcriptional regulator Spx (134 aa).

The cysteines at positions 10 and 13 are disulfide-linked.

It belongs to the ArsC family. Spx subfamily. As to quaternary structure, interacts with the C-terminal domain of the alpha subunit of the RNAP.

It localises to the cytoplasm. Its function is as follows. Global transcriptional regulator that plays a key role in stress response and exerts either positive or negative regulation of genes. Acts by interacting with the C-terminal domain of the alpha subunit of the RNA polymerase (RNAP). This interaction can enhance binding of RNAP to the promoter region of target genes and stimulate their transcription, or block interaction of RNAP with activator. This is Global transcriptional regulator Spx from Streptococcus pyogenes serotype M6 (strain ATCC BAA-946 / MGAS10394).